A 478-amino-acid polypeptide reads, in one-letter code: Adenosylhomocysteinase (478 aa).

3 residues coordinate substrate: Thr-57, Asp-139, and Glu-201. 202-204 (TTT) provides a ligand contact to NAD(+). Lys-231 and Asp-235 together coordinate substrate. Residues Asn-236, 265-270 (GYGDVG), Glu-288, Asn-323, 344-346 (IGH), and Asn-392 contribute to the NAD(+) site.

The protein belongs to the adenosylhomocysteinase family. It depends on NAD(+) as a cofactor.

The protein resides in the cytoplasm. The enzyme catalyses S-adenosyl-L-homocysteine + H2O = L-homocysteine + adenosine. Its pathway is amino-acid biosynthesis; L-homocysteine biosynthesis; L-homocysteine from S-adenosyl-L-homocysteine: step 1/1. May play a key role in the regulation of the intracellular concentration of adenosylhomocysteine. The protein is Adenosylhomocysteinase of Corynebacterium glutamicum (strain R).